A 758-amino-acid polypeptide reads, in one-letter code: 5-methyltetrahydropteroyltriglutamate--homocysteine methyltransferase (758 aa).

5-methyltetrahydropteroyltri-L-glutamate contacts are provided by residues 17-20 (RELK) and Lys-113. Residues 433 to 435 (IGS) and Glu-486 each bind L-homocysteine. Residues 433-435 (IGS) and Glu-486 each bind L-methionine. 5-methyltetrahydropteroyltri-L-glutamate contacts are provided by residues 517 to 518 (RC) and Trp-563. Asp-601 contacts L-homocysteine. Position 601 (Asp-601) interacts with L-methionine. Glu-607 serves as a coordination point for 5-methyltetrahydropteroyltri-L-glutamate. Zn(2+)-binding residues include His-643, Cys-645, and Glu-667. His-696 serves as the catalytic Proton donor. Cys-728 lines the Zn(2+) pocket.

Belongs to the vitamin-B12 independent methionine synthase family. Zn(2+) is required as a cofactor.

The enzyme catalyses 5-methyltetrahydropteroyltri-L-glutamate + L-homocysteine = tetrahydropteroyltri-L-glutamate + L-methionine. Its pathway is amino-acid biosynthesis; L-methionine biosynthesis via de novo pathway; L-methionine from L-homocysteine (MetE route): step 1/1. In terms of biological role, catalyzes the transfer of a methyl group from 5-methyltetrahydrofolate to homocysteine resulting in methionine formation. The protein is 5-methyltetrahydropteroyltriglutamate--homocysteine methyltransferase of Nitrosomonas europaea (strain ATCC 19718 / CIP 103999 / KCTC 2705 / NBRC 14298).